Here is a 72-residue protein sequence, read N- to C-terminus: Large ribosomal subunit protein bL31 (72 aa).

The Zn(2+) site is built by Cys-16, Cys-18, Cys-37, and Cys-40.

This sequence belongs to the bacterial ribosomal protein bL31 family. Type A subfamily. Part of the 50S ribosomal subunit. Zn(2+) is required as a cofactor.

Functionally, binds the 23S rRNA. This Idiomarina loihiensis (strain ATCC BAA-735 / DSM 15497 / L2-TR) protein is Large ribosomal subunit protein bL31.